Consider the following 283-residue polypeptide: Pantothenate synthetase (283 aa).

Position 30 to 37 (30 to 37 (MGNLHDGH)) interacts with ATP. Residue H37 is the Proton donor of the active site. Q61 provides a ligand contact to (R)-pantoate. Residue Q61 participates in beta-alanine binding. 149–152 (GEKD) contributes to the ATP binding site. A (R)-pantoate-binding site is contributed by Q155. 186-189 (LSSR) lines the ATP pocket.

Belongs to the pantothenate synthetase family. Homodimer.

Its subcellular location is the cytoplasm. It catalyses the reaction (R)-pantoate + beta-alanine + ATP = (R)-pantothenate + AMP + diphosphate + H(+). It functions in the pathway cofactor biosynthesis; (R)-pantothenate biosynthesis; (R)-pantothenate from (R)-pantoate and beta-alanine: step 1/1. Its function is as follows. Catalyzes the condensation of pantoate with beta-alanine in an ATP-dependent reaction via a pantoyl-adenylate intermediate. The sequence is that of Pantothenate synthetase from Shigella sonnei (strain Ss046).